The sequence spans 72 residues: Translation initiation factor IF-1 (72 aa).

The S1-like domain maps to 1–72; it reads MAKEDSIRMQ…NKGRIVYRER (72 aa).

The protein belongs to the IF-1 family. In terms of assembly, component of the 30S ribosomal translation pre-initiation complex which assembles on the 30S ribosome in the order IF-2 and IF-3, IF-1 and N-formylmethionyl-tRNA(fMet); mRNA recruitment can occur at any time during PIC assembly.

The protein resides in the cytoplasm. Functionally, one of the essential components for the initiation of protein synthesis. Stabilizes the binding of IF-2 and IF-3 on the 30S subunit to which N-formylmethionyl-tRNA(fMet) subsequently binds. Helps modulate mRNA selection, yielding the 30S pre-initiation complex (PIC). Upon addition of the 50S ribosomal subunit IF-1, IF-2 and IF-3 are released leaving the mature 70S translation initiation complex. The sequence is that of Translation initiation factor IF-1 from Halorhodospira halophila (strain DSM 244 / SL1) (Ectothiorhodospira halophila (strain DSM 244 / SL1)).